The following is a 610-amino-acid chain: UvrABC system protein C (610 aa).

The GIY-YIG domain maps to 16–94; sequence SQPGVYRMYD…IKLYQPRYNV (79 aa). The UVR domain maps to 204–239; sequence DQVLTQLIARMEKASQDLAFEEAARIRDQIQAVRRV.

It belongs to the UvrC family. In terms of assembly, interacts with UvrB in an incision complex.

The protein localises to the cytoplasm. Its function is as follows. The UvrABC repair system catalyzes the recognition and processing of DNA lesions. UvrC both incises the 5' and 3' sides of the lesion. The N-terminal half is responsible for the 3' incision and the C-terminal half is responsible for the 5' incision. This is UvrABC system protein C from Salmonella typhi.